A 2248-amino-acid chain; its full sequence is Zinc finger protein lin-13 (2248 aa).

The interval 1–189 is disordered; it reads MDEFELFQQL…TYASQYSRPP (189 aa). Over residues 29 to 38 the composition is skewed to polar residues; the sequence is QQANNNQSAP. Residues 54–92 show a composition bias toward basic and acidic residues; the sequence is KQREEEEAQRLADFMQKDMKEPAVKRKRGSEEYKKDPLE. Positions 145-155 are enriched in acidic residues; sequence ELDENYMEENE. Residues 440–444 carry the Required for interaction with hpl-2 isoform a motif; it reads PLVPV. Residues 503–525 form a C2H2-type 1 zinc finger; the sequence is HTCIKCGKTFGTEFMLKHHAQSH. The interval 603–665 is disordered; sequence KTKKENRNIT…FTSSKQKKKR (63 aa). The span at 605 to 620 shows a compositional bias: basic and acidic residues; it reads KKENRNITDSNEKEFS. 6 consecutive C2H2-type zinc fingers follow at residues 812-837, 959-982, 1140-1162, 1556-1578, 1601-1623, and 1657-1680; these read VRCI…SDVH, YSCS…TRFH, LMCY…MDDH, FKCQ…MRDH, WLCR…MAIH, and YSCG…SVAH. Residues 1859–1877 are compositionally biased toward polar residues; sequence PRSSLQTNGSSMGSVTTNG. Residues 1859–1900 form a disordered region; the sequence is PRSSLQTNGSSMGSVTTNGGRVVRPSPPNSMNVTLRRAPPQQ.

In terms of assembly, interacts (via PLVPV motif) with chromobox protein homolog hpl-2 (via chromo (shadow subtype) domain); the interaction is direct and influences localization of hpl-2 to nuclear foci. In the L3 stage, expressed in syncytial hypodermal cell 7, body wall muscles, intestinal cells, distal tip cells and many neurons.

The protein localises to the nucleus. Its function is as follows. Involved in repression of vulval fate, possibly by a tumor suppressor protein Rb-mediated mechanism. May act in a common pathway with retinoblastoma-like protein homolog lin-35 and hpl-2 to influence the ER stress response in the intestine. Plays a role in recruiting chromobox protein homolog hpl-2 to specific chromatin sites. The protein is Zinc finger protein lin-13 (lin-13) of Caenorhabditis elegans.